Consider the following 833-residue polypeptide: Prickle-like protein 1 (833 aa).

The segment at 1-22 (MPLEMDQKISKHTFGCQRSSTS) is disordered. Residues 14-122 (FGCQRSSTSD…NIKMLSRAVM (109 aa)) form the PET domain. 3 consecutive LIM zinc-binding domains span residues 124-188 (AMCE…ELLK), 189-249 (PRCS…HYAE), and 250-313 (YCES…EDVH). Disordered stretches follow at residues 312 to 346 (VHAS…ADQC), 432 to 456 (EDNR…RNSR), 603 to 702 (CQEK…ERNP), 767 to 786 (CSSS…QPIP), and 805 to 833 (NALS…CIIS). 2 stretches are compositionally biased toward basic and acidic residues: residues 432 to 453 (EDNR…DLQR) and 603 to 614 (CQEKPPPEEKPM). The segment covering 669–680 (RPHHHRRRKSRK) has biased composition (basic residues). A compositionally biased stretch (basic residues) spans 817–833 (TKSKKKKGHKGKNCIIS). A Cysteine methyl ester modification is found at Cys830. Cys830 is lipidated: S-farnesyl cysteine. The propeptide at 831–833 (IIS) is removed in mature form.

This sequence belongs to the prickle / espinas / testin family. As to quaternary structure, interacts with dvl2/dsh and mapk8/jnk1.

It is found in the cell membrane. In terms of biological role, acts in a planar cell polarity (PCP) complex; polarization along the apical/basal axis of epithelial cells. Regulates the polarized assembly of fibronectrin on the surface of the mesoderm during gastrulation. Essential for gastrulation cell movements, cooperating with dvl2/dsh to activate jnk. Acts together with tes to control axial elongation. The polypeptide is Prickle-like protein 1 (Xenopus tropicalis (Western clawed frog)).